Reading from the N-terminus, the 540-residue chain is Chaperonin GroEL (540 aa).

ATP-binding positions include 30–33, lysine 51, 87–91, glycine 415, 479–481, and aspartate 495; these read TLGP, DGTTT, and NAA.

The protein belongs to the chaperonin (HSP60) family. Forms a cylinder of 14 subunits composed of two heptameric rings stacked back-to-back. Interacts with the co-chaperonin GroES.

The protein localises to the cytoplasm. It carries out the reaction ATP + H2O + a folded polypeptide = ADP + phosphate + an unfolded polypeptide.. Functionally, together with its co-chaperonin GroES, plays an essential role in assisting protein folding. The GroEL-GroES system forms a nano-cage that allows encapsulation of the non-native substrate proteins and provides a physical environment optimized to promote and accelerate protein folding. The sequence is that of Chaperonin GroEL from Pluralibacter gergoviae (Enterobacter gergoviae).